Here is a 345-residue protein sequence, read N- to C-terminus: Heat-inducible transcription repressor HrcA (345 aa).

Belongs to the HrcA family.

In terms of biological role, negative regulator of class I heat shock genes (grpE-dnaK-dnaJ and groELS operons). Prevents heat-shock induction of these operons. The sequence is that of Heat-inducible transcription repressor HrcA from Tetragenococcus halophilus (Pediococcus halophilus).